A 173-amino-acid chain; its full sequence is Nicotinamide-nucleotide adenylyltransferase (173 aa).

Belongs to the archaeal NMN adenylyltransferase family.

The protein localises to the cytoplasm. It carries out the reaction beta-nicotinamide D-ribonucleotide + ATP + H(+) = diphosphate + NAD(+). It participates in cofactor biosynthesis; NAD(+) biosynthesis; NAD(+) from nicotinamide D-ribonucleotide: step 1/1. This is Nicotinamide-nucleotide adenylyltransferase from Methanosarcina barkeri (strain Fusaro / DSM 804).